The chain runs to 229 residues: Mannose-specific lectin TAR1 (229 aa).

Residues 1–23 form the signal peptide; the sequence is MAKLLLFLLPAILGLLIPRSAVA. 2 Bulb-type lectin domains span residues 26-131 and 145-229; these read TNYL…PWVP and DNLL…DYVL. Residues 51-55, Y59, W63, Q64, 170-174, Y178, and 182-185 contribute to the beta-D-mannose site; these read QNDCN, QGDCN, and YGWQ. Residues 51 to 59 carry the Carbohydrate-binding motif 1 motif; the sequence is QNDCNLVLY. 2 cysteine pairs are disulfide-bonded: C54–C74 and C173–C195. The Carbohydrate-binding motif 2 signature appears at 170–178; it reads QGDCNLVLY.

Forms heterotetramer of 2 chains 1 and 2 chains 2 arranged as a dimer of chain 1 and chain 2 heterodimers.

Its subcellular location is the secreted. In terms of biological role, mannose-specific lectin. Shows agglutinating activity towards erythrocytes from rabbit. The polypeptide is Mannose-specific lectin TAR1 (Colocasia esculenta (Wild taro)).